Consider the following 150-residue polypeptide: Small ribosomal subunit protein uS13 (150 aa).

This sequence belongs to the universal ribosomal protein uS13 family. In terms of assembly, part of the 30S ribosomal subunit. Forms a loose heterodimer with protein S19. Forms two bridges to the 50S subunit in the 70S ribosome.

In terms of biological role, located at the top of the head of the 30S subunit, it contacts several helices of the 16S rRNA. In the 70S ribosome it contacts the 23S rRNA (bridge B1a) and protein L5 of the 50S subunit (bridge B1b), connecting the 2 subunits; these bridges are implicated in subunit movement. In Aeropyrum pernix (strain ATCC 700893 / DSM 11879 / JCM 9820 / NBRC 100138 / K1), this protein is Small ribosomal subunit protein uS13.